The following is a 78-amino-acid chain: Acyl carrier protein (78 aa).

The 76-residue stretch at 2–77 (STIEERVKKI…AAIDYINGHQ (76 aa)) folds into the Carrier domain. O-(pantetheine 4'-phosphoryl)serine is present on S37.

Belongs to the acyl carrier protein (ACP) family. Post-translationally, 4'-phosphopantetheine is transferred from CoA to a specific serine of apo-ACP by AcpS. This modification is essential for activity because fatty acids are bound in thioester linkage to the sulfhydryl of the prosthetic group.

Its subcellular location is the cytoplasm. The protein operates within lipid metabolism; fatty acid biosynthesis. Its function is as follows. Carrier of the growing fatty acid chain in fatty acid biosynthesis. The polypeptide is Acyl carrier protein (Erwinia tasmaniensis (strain DSM 17950 / CFBP 7177 / CIP 109463 / NCPPB 4357 / Et1/99)).